Reading from the N-terminus, the 1222-residue chain is Alpha-mannosidase D (1222 aa).

The N-terminal stretch at methionine 1 to threonine 21 is a signal peptide. Residues phenylalanine 22–leucine 1170 lie on the Extracellular side of the membrane. Histidine 71 and aspartate 73 together coordinate Zn(2+). N-linked (GlcNAc...) asparagine glycosylation occurs at asparagine 175. Zn(2+)-binding residues include aspartate 185 and histidine 453. Aspartate 185 acts as the Nucleophile in catalysis. 13 N-linked (GlcNAc...) asparagine glycosylation sites follow: asparagine 492, asparagine 496, asparagine 547, asparagine 551, asparagine 566, asparagine 613, asparagine 665, asparagine 768, asparagine 785, asparagine 952, asparagine 981, asparagine 1069, and asparagine 1084. Low complexity predominate over residues lysine 493–threonine 549. The tract at residues lysine 493–glutamate 554 is disordered. The chain crosses the membrane as a helical span at residues isoleucine 1171–valine 1191. At threonine 1192 to proline 1222 the chain is on the cytoplasmic side. The span at leucine 1202–leucine 1211 shows a compositional bias: low complexity. The disordered stretch occupies residues leucine 1202–proline 1222. Positions isoleucine 1212 to proline 1222 are enriched in polar residues.

It belongs to the glycosyl hydrolase 38 family. Zn(2+) serves as cofactor.

It localises to the membrane. The enzyme catalyses Hydrolysis of terminal, non-reducing alpha-D-mannose residues in alpha-D-mannosides.. This is Alpha-mannosidase D (manD) from Dictyostelium discoideum (Social amoeba).